We begin with the raw amino-acid sequence, 374 residues long: Ferroptosis suppressor protein 1 (374 aa).

The N-myristoyl glycine moiety is linked to residue Gly2. A helical transmembrane segment spans residues 13–35 (VVIVGGGFAGIAAATQLKSFGIP). Residues 17–21 (GGGFA), Arg53, and Val81 each bind 6-hydroxy-FAD. Lys167 is modified (N6-acetyllysine). Asp285 is a binding site for 6-hydroxy-FAD.

It belongs to the FAD-dependent oxidoreductase family. 6-hydroxy-FAD is required as a cofactor. Post-translationally, N-myristoylation at Gly-2 mediates the recruitment to lipid droplets and plasma membrane. In terms of processing, acetylation at Lys-167 prevents AIFM2 ubiquitination and degradation, thereby inhibiting ferroptosis. KAT2B mediates acetylation at Lys-167, while HDAC3 removes it. Ubiquitinated. AIFM2 undergoes 'Lys-29'-ubiquitination and proteasomal degradation, which is inhibited by acetylation at Lys-167.

The protein localises to the lipid droplet. The protein resides in the cell membrane. It is found in the cytoplasm. Its subcellular location is the mitochondrion membrane. It localises to the nucleus. The catalysed reaction is ubiquinone-10 + NADH + H(+) = ubiquinol-10 + NAD(+). It catalyses the reaction phylloquinone + NADH + H(+) = phylloquinol + NAD(+). It carries out the reaction menaquinone-4 + NADH + H(+) = menaquinol-4 + NAD(+). The enzyme catalyses menadione + NADH + H(+) = menadiol + NAD(+). The modification by 4-hydroxy-2-nonenal (HNE) adduction in mitochondria results in loss of the oxidoreductase activity and activation of a novel function in mitochondrial oxidative stress signaling. An NAD(P)H-dependent oxidoreductase that acts as a key inhibitor of ferroptosis. At the plasma membrane, catalyzes reduction of coenzyme Q/ubiquinone-10 to ubiquinol-10, a lipophilic radical-trapping antioxidant that prevents lipid oxidative damage and consequently ferroptosis. Acts in parallel to GPX4 to suppress phospholipid peroxidation and ferroptosis. This anti-ferroptotic function is independent of cellular glutathione levels. Also acts as a potent radical-trapping antioxidant by mediating warfarin-resistant vitamin K reduction in the canonical vitamin K cycle: catalyzes NAD(P)H-dependent reduction of vitamin K (phylloquinone, menaquinone-4 and menadione) to hydroquinone forms. Hydroquinones act as potent radical-trapping antioxidants inhibitor of phospholipid peroxidation and ferroptosis. May play a role in mitochondrial stress signaling. Upon oxidative stress, associates with the lipid peroxidation end product 4-hydroxy-2-nonenal (HNE) forming a lipid adduct devoid of oxidoreductase activity, which then translocates from mitochondria into the nucleus triggering DNA damage and cell death. This chain is Ferroptosis suppressor protein 1 (aifm2), found in Xenopus tropicalis (Western clawed frog).